A 701-amino-acid chain; its full sequence is DNA ligase (701 aa).

NAD(+) contacts are provided by residues Asp50 to Asp54, Ser99 to Leu100, and Glu130. The active-site N6-AMP-lysine intermediate is the Lys132. Arg153, Glu187, Lys301, and Lys325 together coordinate NAD(+). Zn(2+)-binding residues include Cys419, Cys422, Cys437, and Cys442. The BRCT domain occupies Asn626–Asn701.

Belongs to the NAD-dependent DNA ligase family. LigA subfamily. The cofactor is Mg(2+). Mn(2+) is required as a cofactor.

It carries out the reaction NAD(+) + (deoxyribonucleotide)n-3'-hydroxyl + 5'-phospho-(deoxyribonucleotide)m = (deoxyribonucleotide)n+m + AMP + beta-nicotinamide D-nucleotide.. In terms of biological role, DNA ligase that catalyzes the formation of phosphodiester linkages between 5'-phosphoryl and 3'-hydroxyl groups in double-stranded DNA using NAD as a coenzyme and as the energy source for the reaction. It is essential for DNA replication and repair of damaged DNA. The polypeptide is DNA ligase (Malacoplasma penetrans (strain HF-2) (Mycoplasma penetrans)).